The primary structure comprises 341 residues: UDP-3-O-acylglucosamine N-acyltransferase (341 aa).

Histidine 241 serves as the catalytic Proton acceptor.

It belongs to the transferase hexapeptide repeat family. LpxD subfamily. As to quaternary structure, homotrimer.

The enzyme catalyses a UDP-3-O-[(3R)-3-hydroxyacyl]-alpha-D-glucosamine + a (3R)-hydroxyacyl-[ACP] = a UDP-2-N,3-O-bis[(3R)-3-hydroxyacyl]-alpha-D-glucosamine + holo-[ACP] + H(+). It participates in bacterial outer membrane biogenesis; LPS lipid A biosynthesis. Functionally, catalyzes the N-acylation of UDP-3-O-acylglucosamine using 3-hydroxyacyl-ACP as the acyl donor. Is involved in the biosynthesis of lipid A, a phosphorylated glycolipid that anchors the lipopolysaccharide to the outer membrane of the cell. This chain is UDP-3-O-acylglucosamine N-acyltransferase, found in Mannheimia succiniciproducens (strain KCTC 0769BP / MBEL55E).